Reading from the N-terminus, the 95-residue chain is Putative pterin-4-alpha-carbinolamine dehydratase (95 aa).

Belongs to the pterin-4-alpha-carbinolamine dehydratase family.

The enzyme catalyses (4aS,6R)-4a-hydroxy-L-erythro-5,6,7,8-tetrahydrobiopterin = (6R)-L-erythro-6,7-dihydrobiopterin + H2O. This is Putative pterin-4-alpha-carbinolamine dehydratase from Thermosynechococcus vestitus (strain NIES-2133 / IAM M-273 / BP-1).